The sequence spans 276 residues: ATP synthase subunit a (276 aa).

The next 6 membrane-spanning stretches (helical) occupy residues 27 to 47 (ITML…LEVG), 61 to 81 (GQTF…SLAA), 120 to 140 (LPFI…GALL), 159 to 179 (DINT…YAGL), 225 to 245 (LVVA…LMAL), and 246 to 266 (GLFT…AYIH).

This sequence belongs to the ATPase A chain family. In terms of assembly, F-type ATPases have 2 components, CF(1) - the catalytic core - and CF(0) - the membrane proton channel. CF(1) has five subunits: alpha(3), beta(3), gamma(1), delta(1), epsilon(1). CF(0) has four main subunits: a, b, b' and c.

Its subcellular location is the cellular thylakoid membrane. In terms of biological role, key component of the proton channel; it plays a direct role in the translocation of protons across the membrane. This Synechocystis sp. (strain ATCC 27184 / PCC 6803 / Kazusa) protein is ATP synthase subunit a.